Consider the following 317-residue polypeptide: MKLSEIALKVDATFSGEDLEIFALNSLKNANKAELTYCDGEKNAKFISTSNAGAILVTKSLLDLVPAGMVALVCDNPHLAFAILSKIYAKPLFCEPKPSNIAQSATIMPNVYIGSNVSVGENTIVMAGAFLGDNVTIGKNCIIHPNVVIYNDCVIGNECHLLANCVIGSDGFGYAHTKTGEHVKIYHNGNVVLGDFVEIGACTTIDRGVFESTMIANYTKIDNLVQIGHNCELGNGCLIVSQTGLAGSTVLGRNVVMGGQSGSAGHVKVGDFAQIAARGGVSKDLPGGKKYAGAYPIMELSEQFKFQAKILRFFKKN.

Histidine 229 acts as the Proton acceptor in catalysis.

The protein belongs to the transferase hexapeptide repeat family. LpxD subfamily. In terms of assembly, homotrimer.

The catalysed reaction is a UDP-3-O-[(3R)-3-hydroxyacyl]-alpha-D-glucosamine + a (3R)-hydroxyacyl-[ACP] = a UDP-2-N,3-O-bis[(3R)-3-hydroxyacyl]-alpha-D-glucosamine + holo-[ACP] + H(+). The protein operates within bacterial outer membrane biogenesis; LPS lipid A biosynthesis. Its function is as follows. Catalyzes the N-acylation of UDP-3-O-acylglucosamine using 3-hydroxyacyl-ACP as the acyl donor. Is involved in the biosynthesis of lipid A, a phosphorylated glycolipid that anchors the lipopolysaccharide to the outer membrane of the cell. The protein is UDP-3-O-acylglucosamine N-acyltransferase of Campylobacter concisus (strain 13826).